A 472-amino-acid polypeptide reads, in one-letter code: tRNA-2-methylthio-N(6)-dimethylallyladenosine synthase (472 aa).

Residues 22–142 (RKVFVKTYGC…LPDALKRARA (121 aa)) form the MTTase N-terminal domain. Positions 31, 67, 105, 183, 187, and 190 each coordinate [4Fe-4S] cluster. The 235-residue stretch at 169–403 (RARGVTAFLT…LLVKQQRGFA (235 aa)) folds into the Radical SAM core domain. The TRAM domain occupies 404–466 (EACVGREIDL…PNSLFAEMIG (63 aa)).

This sequence belongs to the methylthiotransferase family. MiaB subfamily. As to quaternary structure, monomer. [4Fe-4S] cluster is required as a cofactor.

The protein resides in the cytoplasm. It catalyses the reaction N(6)-dimethylallyladenosine(37) in tRNA + (sulfur carrier)-SH + AH2 + 2 S-adenosyl-L-methionine = 2-methylsulfanyl-N(6)-dimethylallyladenosine(37) in tRNA + (sulfur carrier)-H + 5'-deoxyadenosine + L-methionine + A + S-adenosyl-L-homocysteine + 2 H(+). Functionally, catalyzes the methylthiolation of N6-(dimethylallyl)adenosine (i(6)A), leading to the formation of 2-methylthio-N6-(dimethylallyl)adenosine (ms(2)i(6)A) at position 37 in tRNAs that read codons beginning with uridine. This Rhizobium meliloti (strain 1021) (Ensifer meliloti) protein is tRNA-2-methylthio-N(6)-dimethylallyladenosine synthase.